Consider the following 1169-residue polypeptide: Pesticidal crystal protein Cry1Fb (1169 aa).

It belongs to the delta endotoxin family.

In terms of biological role, promotes colloidosmotic lysis by binding to the midgut epithelial cells of insects. This is Pesticidal crystal protein Cry1Fb (cry1Fb) from Bacillus thuringiensis subsp. morrisoni.